A 124-amino-acid polypeptide reads, in one-letter code: Suppressor of RNA silencing (124 aa).

The interval 1–14 (MPKSEFFREERKRR) is basic motif (BM). Positions 30 to 68 (CGYSCGMPPAVEKVSVPADTEEDVYMLIFPYEQFCGEKH) are C-2. Positions 72–124 (YESLKDVSDDELKLRRLERQRETLLASFQQKLKRYDEKIALLSEKFKNLRSKL) form a coiled coil. S79 is modified (phosphoserine).

The protein belongs to the virgaviridae suppressor of RNA silencing family. As to quaternary structure, homooligomer. Post-translationally, phosphorylated at Ser-79 by a host PKA-like kinase; the phosphorylation at this site seems to suppress host cell death.

It localises to the host chloroplast envelope. It is found in the host endoplasmic reticulum. The protein resides in the host cell junction. Its subcellular location is the host plasmodesma. In terms of biological role, suppressor of RNA-mediated gene silencing, also known as post-transcriptional gene silencing (PTGS), a mechanism of plant viral defense that limits the accumulation of viral RNAs. Promotes viral cell-to-cell long distance movement. This Peanut clump virus (isolate 87/TGTA2) (PCV) protein is Suppressor of RNA silencing.